The primary structure comprises 251 residues: Chromobox protein homolog 7 (251 aa).

In terms of domain architecture, Chromo spans 11-69 (FAVESIRKKRVRKGKVEYLVKWKGWPPKYSTWEPEEHILDPRLVMAYEEKEERDRASGY). Residues 190–220 (EPAAQPPEEEADADLAEGPPPWTPALPSSEV) form a disordered region. The interval 223-236 (TDITANSITVTFRE) is required for cellular lifespan extension.

In terms of assembly, component of a PRC1-like complex. Interacts with RING1 and RNF2/RING1B, but not with BMI1, EED or EZH2. Interacts with PCGF1, PCGF2, PCGF3, PCGF5 and PCGF6.

It localises to the nucleus. In terms of biological role, component of a Polycomb group (PcG) multiprotein PRC1-like complex, a complex class required to maintain the transcriptionally repressive state of many genes, including Hox genes, throughout development. PcG PRC1 complex acts via chromatin remodeling and modification of histones; it mediates monoubiquitination of histone H2A 'Lys-119', rendering chromatin heritably changed in its expressibility. Promotes histone H3 trimethylation at 'Lys-9' (H3K9me3). Binds to trimethylated lysine residues in histones, and possibly also other proteins. Regulator of cellular lifespan by maintaining the repression of CDKN2A, but not by inducing telomerase activity. The sequence is that of Chromobox protein homolog 7 (CBX7) from Homo sapiens (Human).